A 666-amino-acid polypeptide reads, in one-letter code: Probable potassium transport system protein Kup (666 aa).

12 consecutive transmembrane segments (helical) span residues 16–36 (GFIIALGIVYGDIGTSPLYTM), 58–78 (ISLIIWTLTLITTIKYVLIAL), 100–120 (PWLIIPAMIGGATLLSDGALT), 141–161 (IYQNQTNIIITTLVILIVLFG), 165–185 (FGTGFIGKIFGPVMFIWFSFL), 221–241 (IFILGSIFLATTGAEALYSDL), 253–273 (WPFVKMCIVWSYCGQAAWILA), 294–314 (VYLVSLATLAAIIASQALISG), 343–363 (LYIPVINWILFAVTSCTVLAF), 373–393 (YGLAITITMLMTTILLKYYLI), 399–419 (PILAHLAMAFFALVEFIFFLA), and 424–444 (FMHGGYAVVILALAIVFVMFI).

This sequence belongs to the HAK/KUP transporter (TC 2.A.72) family.

It localises to the cell membrane. It carries out the reaction K(+)(in) + H(+)(in) = K(+)(out) + H(+)(out). Transport of potassium into the cell. Likely operates as a K(+):H(+) symporter. In Streptococcus pyogenes serotype M4 (strain MGAS10750), this protein is Probable potassium transport system protein Kup.